Consider the following 153-residue polypeptide: Aspartate carbamoyltransferase regulatory chain (153 aa).

Cysteine 109, cysteine 114, cysteine 138, and cysteine 141 together coordinate Zn(2+).

Belongs to the PyrI family. In terms of assembly, contains catalytic and regulatory chains. Requires Zn(2+) as cofactor.

Functionally, involved in allosteric regulation of aspartate carbamoyltransferase. The sequence is that of Aspartate carbamoyltransferase regulatory chain from Vibrio vulnificus (strain YJ016).